The chain runs to 393 residues: Pyridinium-3,5-bisthiocarboxylic acid mononucleotide nickel insertion protein (393 aa).

It belongs to the LarC family.

The enzyme catalyses Ni(II)-pyridinium-3,5-bisthiocarboxylate mononucleotide = pyridinium-3,5-bisthiocarboxylate mononucleotide + Ni(2+). Functionally, involved in the biosynthesis of a nickel-pincer cofactor ((SCS)Ni(II) pincer complex). Binds Ni(2+), and functions in nickel delivery to pyridinium-3,5-bisthiocarboxylic acid mononucleotide (P2TMN), to form the mature cofactor. Is thus probably required for the activation of nickel-pincer cofactor-dependent enzymes. This chain is Pyridinium-3,5-bisthiocarboxylic acid mononucleotide nickel insertion protein, found in Nocardioides sp. (strain ATCC BAA-499 / JS614).